The primary structure comprises 1303 residues: Endoplasmic reticulum transmembrane helix translocase spfA (1303 aa).

2 helical membrane passes run 25–45 (LHAY…VYLS) and 57–77 (EWTF…WLMT). An A-domain; part 1 region spans residues 158 to 191 (KPPVKVFQQAQGLTSKEEIDRIQHHYGDNTFDIP). 2 helical membrane passes run 201–221 (EHAV…WMLD) and 223–243 (YWYY…TVVW). Residues 256-408 (NIKPYDVWVY…LVRTMIYSTE (153 aa)) are A-domain; part 2. An N-linked (GlcNAc...) asparagine glycan is attached at Asn-287. A helical membrane pass occupies residues 415-435 (VEALLFILFLLIFAIAAAWYV). Asn-474 carries an N-linked (GlcNAc...) asparagine glycan. The P-domain; part 1 stretch occupies residues 484-513 (AIFCTEPFRIPFAGRVDVACFDKTGTLTGE). Asp-505 (4-aspartylphosphate intermediate) is an active-site residue. Mg(2+) is bound by residues Asp-505 and Thr-507. 505-507 (DKT) is a binding site for ATP. An N-domain region spans residues 515-721 (LVVDGIAGLT…FAGFLVLQCP (207 aa)). Asn-589 is a glycosylation site (N-linked (GlcNAc...) asparagine). 2 residues coordinate ATP: Phe-616 and Arg-678. The interval 724–883 (EDAIKAVRML…HVGVALLNGS (160 aa)) is P-domain; part 2. Residue Asn-734 is glycosylated (N-linked (GlcNAc...) asparagine). ATP is bound by residues Asp-746 and 862 to 866 (DGTND). Asp-862 contacts Mg(2+). Positions 884 to 1019 (PEDLAKIAEH…ELDDSEPPTI (136 aa)) are arm-like. The N-linked (GlcNAc...) asparagine glycan is linked to Asn-958. Residues 1020-1035 (KLGDASVAAPFTSKLA) are P-domain; part 3. The next 5 membrane-spanning stretches (helical) occupy residues 1060 to 1080 (ILAL…LDGI), 1082 to 1102 (FGDG…LSIS), 1122 to 1142 (VYII…LIYL), 1201 to 1221 (AMYW…TEFI), and 1239 to 1259 (VTLT…ENVL). The tract at residues 1277 to 1303 (DQLQREMERKKQEELETQAEKERQRKV) is disordered.

It belongs to the cation transport ATPase (P-type) (TC 3.A.3) family. Type V subfamily. Requires Mg(2+) as cofactor.

The protein resides in the endoplasmic reticulum membrane. The catalysed reaction is [protein]-with a C-terminal TM segment(out) + ATP + H2O = [protein]-with a C-terminal TM segment(in) + ADP + phosphate + H(+). Its activity is regulated as follows. The ATPase activity is stimulated by phosphatidylinositol 4-phosphate (PI4P). Endoplasmic reticulum (ER) translocase required to remove mitochondrial transmembrane proteins mistargeted to the endoplasmic reticulum. Acts as a dislocase that mediates the ATP-dependent extraction of mislocalized mitochondrial transmembrane proteins from the endoplasmic reticulum membrane. Works in concert with the ER Ca(2+) pump srcA to support ER homeostasis. With srcA, also supports redox homeostasis and virulence. The polypeptide is Endoplasmic reticulum transmembrane helix translocase spfA (Aspergillus fumigatus (strain ATCC MYA-4609 / CBS 101355 / FGSC A1100 / Af293) (Neosartorya fumigata)).